The primary structure comprises 170 residues: Ureidoglycolate lyase 1 (170 aa).

It belongs to the ureidoglycolate lyase family. As to quaternary structure, homodimer. Requires Ni(2+) as cofactor.

It carries out the reaction (S)-ureidoglycolate = urea + glyoxylate. It participates in nitrogen metabolism; (S)-allantoin degradation. In terms of biological role, catalyzes the catabolism of the allantoin degradation intermediate (S)-ureidoglycolate, generating urea and glyoxylate. Involved in the utilization of allantoin as nitrogen source. In Rhizobium meliloti (strain 1021) (Ensifer meliloti), this protein is Ureidoglycolate lyase 1.